The following is a 143-amino-acid chain: Trypsin inhibitor CMc (143 aa).

The signal sequence occupies residues 1 to 24; sequence MASCSQHLLSAVAIFSVLAGVATA.

It belongs to the protease inhibitor I6 (cereal trypsin/alpha-amylase inhibitor) family. As to expression, endosperm.

It is found in the secreted. Functionally, trypsin inhibitor. No alpha-amylase inhibition detected. The sequence is that of Trypsin inhibitor CMc (ITR2) from Hordeum vulgare (Barley).